A 163-amino-acid polypeptide reads, in one-letter code: uncharacterized protein (163 aa).

It belongs to the IMPDH/GMPR family.

This is an uncharacterized protein from Haemophilus influenzae (strain ATCC 51907 / DSM 11121 / KW20 / Rd).